Consider the following 334-residue polypeptide: Heat-inducible transcription repressor HrcA (334 aa).

It belongs to the HrcA family.

Negative regulator of class I heat shock genes (grpE-dnaK-dnaJ and groELS operons). Prevents heat-shock induction of these operons. This chain is Heat-inducible transcription repressor HrcA, found in Bordetella bronchiseptica (strain ATCC BAA-588 / NCTC 13252 / RB50) (Alcaligenes bronchisepticus).